We begin with the raw amino-acid sequence, 338 residues long: DNA-directed RNA polymerase subunit alpha (338 aa).

The alpha N-terminal domain (alpha-NTD) stretch occupies residues 1–225 (MLISQRPTIT…ELFGLARELN (225 aa)). The segment at 240 to 338 (TEYIAAYSMP…YIDVEAEDSE (99 aa)) is alpha C-terminal domain (alpha-CTD). The disordered stretch occupies residues 319-338 (LEGYDAETGGYIDVEAEDSE).

This sequence belongs to the RNA polymerase alpha chain family. In terms of assembly, homodimer. The RNAP catalytic core consists of 2 alpha, 1 beta, 1 beta' and 1 omega subunit. When a sigma factor is associated with the core the holoenzyme is formed, which can initiate transcription.

It catalyses the reaction RNA(n) + a ribonucleoside 5'-triphosphate = RNA(n+1) + diphosphate. Functionally, DNA-dependent RNA polymerase catalyzes the transcription of DNA into RNA using the four ribonucleoside triphosphates as substrates. In Corynebacterium glutamicum (strain R), this protein is DNA-directed RNA polymerase subunit alpha.